Reading from the N-terminus, the 532-residue chain is Membrane protein insertase YidC (532 aa).

The next 5 helical transmembrane spans lie at 7 to 27 (FFIF…QSQM), 336 to 356 (LTIL…ITFI), 413 to 433 (GGFL…YMLI), 450 to 470 (LSSQ…MFFI), and 492 to 512 (PVIF…YYII).

This sequence belongs to the OXA1/ALB3/YidC family. Type 1 subfamily. Interacts with the Sec translocase complex via SecD. Specifically interacts with transmembrane segments of nascent integral membrane proteins during membrane integration.

It is found in the cell membrane. Its function is as follows. Required for the insertion and/or proper folding and/or complex formation of integral membrane proteins into the membrane. Involved in integration of membrane proteins that insert both dependently and independently of the Sec translocase complex, as well as at least some lipoproteins. Aids folding of multispanning membrane proteins. This chain is Membrane protein insertase YidC, found in Buchnera aphidicola subsp. Acyrthosiphon pisum (strain Tuc7).